The chain runs to 784 residues: Transcription factor Sp1 (784 aa).

The tract at residues Met1 to Leu95 is disordered. N-acetylserine is present on Ser2. Ser2 and Ser7 each carry phosphoserine. Residues Ser2 to Gln84 form a repressor domain region. Lys16 participates in a covalent cross-link: Glycyl lysine isopeptide (Lys-Gly) (interchain with G-Cter in SUMO); alternate. Lys16 is covalently cross-linked (Glycyl lysine isopeptide (Lys-Gly) (interchain with G-Cter in SUMO2); alternate). Gly residues predominate over residues Gly23 to Ala34. Over residues Ser37 to Ser49 the composition is skewed to low complexity. Residue Ser61 is modified to Phosphoserine. The segment covering Glu74–Ser87 has biased composition (low complexity). Residue Ser103 is modified to Phosphoserine; by ATM. Over residues Ile111–Gln125 the composition is skewed to polar residues. The disordered stretch occupies residues Ile111–Val144. Residues Ser126–Ser138 show a composition bias toward low complexity. Residues Gln148–Gln253 form a transactivation domain A (Gln-rich) region. Residues Asn263 to Thr497 form a transactivation domain B (Gln-rich) region. Phosphothreonine; by MAPK8 is present on Thr280. Disordered stretches follow at residues Ser282–Ser303 and Thr333–Gln398. Low complexity-rich tracts occupy residues Thr344–Thr357 and Gln373–Gln398. At Thr455 the chain carries Phosphothreonine; by MAPK1 and MAPK3. Positions Val464–Gln472 match the 9aaTAD motif. Residue Ser493 is glycosylated (O-linked (GlcNAc) serine). A transactivation domain C (highly charged) region spans residues Ser498–Lys611. The disordered stretch occupies residues Gln566 to Arg598. A Phosphoserine; alternate modification is found at Ser613. Ser613 is a glycosylation site (O-linked (GlcNAc) serine; alternate). The tract at residues Asp620–Phe784 is VZV IE62-binding. C2H2-type zinc fingers lie at residues His627–Pro656, Phe657–Lys686, and Phe687–Gly714. Thr641 carries the phosphothreonine; alternate modification. An O-linked (GlcNAc) threonine; alternate glycan is attached at Thr641. Ser642 is a glycosylation site (O-linked (GlcNAc) serine; alternate). Phosphoserine; by PKC/PRKCZ; alternate is present on Ser642. Thr652 is subject to Phosphothreonine; by PKC/PRKCZ. The residue at position 669 (Thr669) is a Phosphothreonine. Position 671 is a phosphoserine; by PKC/PRKCZ (Ser671). Phosphothreonine; by PKC/PRKCZ is present on Thr682. A phosphoserine; alternate mark is found at Ser699 and Ser703. Residues Ser699 and Ser703 are each glycosylated (O-linked (GlcNAc) serine; alternate). The residue at position 704 (Lys704) is an N6-acetyllysine. Positions His709 to Phe784 are domain D. At Thr738 the chain carries Phosphothreonine; by MAPK1, MAPK3 and MAPK8.

This sequence belongs to the Sp1 C2H2-type zinc-finger protein family. Interacts with ATF7IP, ATF7IP2, BAHD1, POGZ, HCFC1, AATF and PHC2. Interacts with SV40 VP2/3 proteins. Interacts with SV40 major capsid protein VP1; this interaction leads to a cooperativity between the 2 proteins in DNA binding. Interacts with HLTF; the interaction may be required for basal transcriptional activity of HLTF. Interacts (deacetylated form) with EP300; the interaction enhances gene expression. Interacts with HDAC1 and JUN. Interacts with ELF1; the interaction is inhibited by glycosylation of SP1. Interaction with NFYA; the interaction is inhibited by glycosylation of SP1. Interacts with SMARCA4/BRG1. Interacts with ATF7IP and TBP. Interacts with MEIS2 isoform 4 and PBX1 isoform PBX1a. Interacts with EGR1. Interacts with RNF112 in an oxidative stress-regulated manner. Interacts with ZBTB7A; ZBTB7A prevents the binding to GC-rich motifs in promoters and represses the transcriptional activity of SP1. Interacts with DDX3X; this interaction potentiates SP1-induced CDKN1A/WAF1/CIP1 transcription. Interacts with MSX1; the interaction may inhibit MSX1 autoinactivation. Interacts with MSX3. As to quaternary structure, (Microbial infection) Interacts with murine minute virus NS1; this interaction allows high levels of viral P38 promoter transactivation by NS1. Post-translationally, phosphorylated on multiple serine and threonine residues. Phosphorylation is coupled to ubiquitination, sumoylation and proteolytic processing. Phosphorylation on Ser-61 enhances proteolytic cleavage. Phosphorylation on Ser-7 enhances ubiquitination and protein degradation. Hyperphosphorylation on Ser-103 in response to DNA damage has no effect on transcriptional activity. MAPK1/MAPK3-mediated phosphorylation on Thr-455 and Thr-738 enhances VEGF transcription but, represses FGF2-triggered PDGFR-alpha transcription. Also implicated in the repression of RECK by ERBB2. Hyperphosphorylated on Thr-280 and Thr-738 during mitosis by MAPK8 shielding SP1 from degradation by the ubiquitin-dependent pathway. Phosphorylated in the zinc-finger domain by calmodulin-activated PKCzeta. Phosphorylation on Ser-642 by PKCzeta is critical for TSA-activated LHR gene expression through release of its repressor, p107. Phosphorylation on Thr-669, Ser-671 and Thr-682 is stimulated by angiotensin II via the AT1 receptor inducing increased binding to the PDGF-D promoter. This phosphorylation is increased in injured artey wall. Ser-61 and Thr-682 can both be dephosphorylated by PP2A during cell-cycle interphase. Dephosphorylation on Ser-61 leads to increased chromatin association during interphase and increases the transcriptional activity. On insulin stimulation, sequentially glycosylated and phosphorylated on several C-terminal serine and threonine residues. Acetylated. Acetylation/deacetylation events affect transcriptional activity. Deacetylation leads to an increase in the expression of the 12(s)-lipooxygenase gene through recruitment of p300 to the promoter. Deacetylated by HDAC6 which leads to increased expression of ENG and positive regulation of angiogenesis. In terms of processing, ubiquitinated. Ubiquitination occurs on the C-terminal proteolytically-cleaved peptide and is triggered by phosphorylation. Post-translationally, sumoylated with SUMO1. Sumoylation modulates proteolytic cleavage of the N-terminal repressor domain. Sumoylation levels are attenuated during tumorigenesis. Phosphorylation mediates SP1 desumoylation. Proteolytic cleavage in the N-terminal repressor domain is prevented by sumoylation. The C-terminal cleaved product is susceptible to degradation. In terms of processing, O-glycosylated; Contains 8 N-acetylglucosamine side chains. Levels are controlled by insulin and the SP1 phosphorylation states. Insulin-mediated O-glycosylation locates SP1 to the nucleus, where it is sequentially deglycosylated and phosphorylated. O-glycosylation affects transcriptional activity through disrupting the interaction with a number of transcription factors including ELF1 and NFYA. Inhibited by peroxisomome proliferator receptor gamma (PPARgamma).

The protein localises to the nucleus. Its subcellular location is the cytoplasm. Transcription factor that can activate or repress transcription in response to physiological and pathological stimuli. Binds with high affinity to GC-rich motifs and regulates the expression of a large number of genes involved in a variety of processes such as cell growth, apoptosis, differentiation and immune responses. Highly regulated by post-translational modifications (phosphorylations, sumoylation, proteolytic cleavage, glycosylation and acetylation). Also binds the PDGFR-alpha G-box promoter. May have a role in modulating the cellular response to DNA damage. Implicated in chromatin remodeling. Plays a role in the recruitment of SMARCA4/BRG1 on the c-FOS promoter Plays an essential role in the regulation of FE65 gene expression. Positively regulates the transcription of the core clock component BMAL1. Plays a role in protecting cells against oxidative stress following brain injury by regulating the expression of RNF112. The sequence is that of Transcription factor Sp1 (Sp1) from Mus musculus (Mouse).